A 382-amino-acid chain; its full sequence is UDP-4-amino-4-deoxy-L-arabinose--oxoglutarate aminotransferase (382 aa).

N6-(pyridoxal phosphate)lysine is present on K183.

It belongs to the DegT/DnrJ/EryC1 family. ArnB subfamily. As to quaternary structure, homodimer. The cofactor is pyridoxal 5'-phosphate.

The catalysed reaction is UDP-4-amino-4-deoxy-beta-L-arabinose + 2-oxoglutarate = UDP-beta-L-threo-pentopyranos-4-ulose + L-glutamate. It participates in nucleotide-sugar biosynthesis; UDP-4-deoxy-4-formamido-beta-L-arabinose biosynthesis; UDP-4-deoxy-4-formamido-beta-L-arabinose from UDP-alpha-D-glucuronate: step 2/3. It functions in the pathway bacterial outer membrane biogenesis; lipopolysaccharide biosynthesis. Catalyzes the conversion of UDP-4-keto-arabinose (UDP-Ara4O) to UDP-4-amino-4-deoxy-L-arabinose (UDP-L-Ara4N). The modified arabinose is attached to lipid A and is required for resistance to polymyxin and cationic antimicrobial peptides. In Pseudomonas fluorescens (strain Pf0-1), this protein is UDP-4-amino-4-deoxy-L-arabinose--oxoglutarate aminotransferase.